Consider the following 129-residue polypeptide: Large ribosomal subunit protein bL20 (129 aa).

This sequence belongs to the bacterial ribosomal protein bL20 family.

Its function is as follows. Binds directly to 23S ribosomal RNA and is necessary for the in vitro assembly process of the 50S ribosomal subunit. It is not involved in the protein synthesizing functions of that subunit. This is Large ribosomal subunit protein bL20 from Mycobacteroides abscessus (strain ATCC 19977 / DSM 44196 / CCUG 20993 / CIP 104536 / JCM 13569 / NCTC 13031 / TMC 1543 / L948) (Mycobacterium abscessus).